The chain runs to 365 residues: 1-aminocyclopropane-1-carboxylate oxidase homolog 1 (365 aa).

The 102-residue stretch at 212–313 folds into the Fe2OG dioxygenase domain; that stretch reads CTNSLLLLGH…RISVACFFSS (102 aa). Fe cation contacts are provided by His238, Asp240, and His294.

Belongs to the iron/ascorbate-dependent oxidoreductase family. Fe cation serves as cofactor.

The sequence is that of 1-aminocyclopropane-1-carboxylate oxidase homolog 1 from Arabidopsis thaliana (Mouse-ear cress).